Consider the following 428-residue polypeptide: C4-dicarboxylate transport protein (428 aa).

A run of 9 helical transmembrane segments spans residues 4 to 24 (SLFKSLYFQVLTAIAIGILLG), 44 to 64 (LIKMIIAPVIFCTVVTGIAGM), 76 to 96 (VALLYFEIVSTIALIIGLIIV), 142 to 162 (IGAFASGNILQVLLFAVLFGF), 184 to 204 (VIFGIINMIMRLAPIGAFGAM), 222 to 242 (LIICFYITCILFVVVVLGTIA), 289 to 309 (VVGLVIPTGYSFNLDGTSIYL), 326 to 346 (IFHQITLLVVLLLSSKGAAGV), and 352 to 372 (IVLAATISAVGHLPVAGLALI).

This sequence belongs to the dicarboxylate/amino acid:cation symporter (DAACS) (TC 2.A.23) family.

It localises to the cell inner membrane. In terms of biological role, responsible for the transport of dicarboxylates such as succinate, fumarate, and malate from the periplasm across the membrane. This Salmonella gallinarum (strain 287/91 / NCTC 13346) protein is C4-dicarboxylate transport protein.